The sequence spans 426 residues: Serine hydroxymethyltransferase 1 (426 aa).

(6S)-5,6,7,8-tetrahydrofolate is bound by residues leucine 121 and 125–127 (GHL). An N6-(pyridoxal phosphate)lysine modification is found at lysine 230. 355 to 357 (SPF) provides a ligand contact to (6S)-5,6,7,8-tetrahydrofolate.

The protein belongs to the SHMT family. Homodimer. Pyridoxal 5'-phosphate serves as cofactor.

The protein localises to the cytoplasm. It catalyses the reaction (6R)-5,10-methylene-5,6,7,8-tetrahydrofolate + glycine + H2O = (6S)-5,6,7,8-tetrahydrofolate + L-serine. It functions in the pathway one-carbon metabolism; tetrahydrofolate interconversion. Its pathway is amino-acid biosynthesis; glycine biosynthesis; glycine from L-serine: step 1/1. In terms of biological role, catalyzes the reversible interconversion of serine and glycine with tetrahydrofolate (THF) serving as the one-carbon carrier. This reaction serves as the major source of one-carbon groups required for the biosynthesis of purines, thymidylate, methionine, and other important biomolecules. Also exhibits THF-independent aldolase activity toward beta-hydroxyamino acids, producing glycine and aldehydes, via a retro-aldol mechanism. The sequence is that of Serine hydroxymethyltransferase 1 from Hahella chejuensis (strain KCTC 2396).